The sequence spans 119 residues: Small ribosomal subunit protein uS10 (119 aa).

This sequence belongs to the universal ribosomal protein uS10 family. In terms of assembly, component of the 40S small ribosomal subunit.

The protein localises to the cytoplasm. Component of the small ribosomal subunit. The ribosome is a large ribonucleoprotein complex responsible for the synthesis of proteins in the cell. In Xenopus laevis (African clawed frog), this protein is Small ribosomal subunit protein uS10 (rps20).